The sequence spans 341 residues: L-threonine 3-dehydrogenase (341 aa).

Residue Cys38 participates in Zn(2+) binding. Active-site charge relay system residues include Thr40 and His43. Residues His63, Glu64, Cys93, Cys96, Cys99, and Cys107 each contribute to the Zn(2+) site. NAD(+) contacts are provided by residues Ile175, Asp195, Arg200, 262 to 264 (LGI), and 286 to 287 (IY).

This sequence belongs to the zinc-containing alcohol dehydrogenase family. Homotetramer. Zn(2+) serves as cofactor.

It is found in the cytoplasm. The enzyme catalyses L-threonine + NAD(+) = (2S)-2-amino-3-oxobutanoate + NADH + H(+). It functions in the pathway amino-acid degradation; L-threonine degradation via oxydo-reductase pathway; glycine from L-threonine: step 1/2. Catalyzes the NAD(+)-dependent oxidation of L-threonine to 2-amino-3-ketobutyrate. The sequence is that of L-threonine 3-dehydrogenase from Enterobacter sp. (strain 638).